The following is a 430-amino-acid chain: Adenylosuccinate synthetase (430 aa).

GTP-binding positions include 12-18 (GDEGKGK) and 40-42 (GHT). Asp13 serves as the catalytic Proton acceptor. Mg(2+)-binding residues include Asp13 and Gly40. Residues 13-16 (DEGK), 38-41 (NAGH), Thr128, Arg142, Gln223, Thr238, and Arg302 contribute to the IMP site. His41 functions as the Proton donor in the catalytic mechanism. Residue 298 to 304 (TTTGRPR) participates in substrate binding. Residues Arg304, 330-332 (SID), and 412-414 (SVG) each bind GTP.

This sequence belongs to the adenylosuccinate synthetase family. In terms of assembly, homodimer. The cofactor is Mg(2+).

The protein resides in the cytoplasm. It carries out the reaction IMP + L-aspartate + GTP = N(6)-(1,2-dicarboxyethyl)-AMP + GDP + phosphate + 2 H(+). Its pathway is purine metabolism; AMP biosynthesis via de novo pathway; AMP from IMP: step 1/2. Functionally, plays an important role in the de novo pathway of purine nucleotide biosynthesis. Catalyzes the first committed step in the biosynthesis of AMP from IMP. This Streptococcus suis (strain 98HAH33) protein is Adenylosuccinate synthetase.